Here is a 418-residue protein sequence, read N- to C-terminus: Ankyrin repeat domain-containing protein 61 (418 aa).

ANK repeat units follow at residues 27–57 (ALHS…NQPI), 75–104 (ESII…DPEV), 132–161 (NRTH…QVNT), 167–196 (NKRS…DVNA), 200–229 (ASMT…NVNC), 234–273 (TGNT…KVNA), 277–306 (KGQT…NVNI), and 310–343 (NGES…PLRM).

The sequence is that of Ankyrin repeat domain-containing protein 61 (ANKRD61) from Homo sapiens (Human).